Consider the following 567-residue polypeptide: Geranylgeranyl transferase type-2 subunit alpha (567 aa).

PFTA repeat units lie at residues 44–78 (LDES…QLEV), 88–122 (LVKA…RLPE), 124–158 (NWAR…QAAV), 159–193 (PPAE…QLHP), 207–241 (VLLK…RADP), and 363–397 (VLQS…ALDP). Ser-98 is modified (phosphoserine). LRR repeat units lie at residues 442–463 (EVRV…EQLL), 464–486 (LVTH…AALR), 487–508 (CLEV…TNLP), 509–530 (RLQE…QPLT), and 534–555 (RLTL…SEHL).

It belongs to the protein prenyltransferase subunit alpha family. Heterotrimer composed of RABGGTA, RABGGTB and CHM; within this trimer, RABGGTA and RABGGTB form the catalytic component B, while CHM (component A) mediates peptide substrate binding. The Rab GGTase dimer (RGGT) interacts with CHM (component A) prior to Rab protein binding; the association is stabilized by geranylgeranyl pyrophosphate (GGpp). The CHM:RGGT:Rab complex is destabilized by GGpp. Interacts with non-phosphorylated form of RAB8A; phosphorylation of RAB8A at 'Thr-72' disrupts this interaction.

It carries out the reaction geranylgeranyl diphosphate + L-cysteinyl-[protein] = S-geranylgeranyl-L-cysteinyl-[protein] + diphosphate. The enzymatic reaction requires the aid of a Rab escort protein (also called component A), such as CHM. Its function is as follows. Catalyzes the transfer of a geranylgeranyl moiety from geranylgeranyl diphosphate to both cysteines of Rab proteins with the C-terminal sequence -XXCC, -XCXC and -CCXX, such as RAB1A, RAB3A, RAB5A and RAB7A. The polypeptide is Geranylgeranyl transferase type-2 subunit alpha (RABGGTA) (Bos taurus (Bovine)).